The chain runs to 314 residues: Homoserine O-acetyltransferase (314 aa).

Catalysis depends on Cys142, which acts as the Acyl-thioester intermediate. Residues Lys163 and Ser192 each coordinate substrate. His235 functions as the Proton acceptor in the catalytic mechanism. The active site involves Glu237. Arg249 provides a ligand contact to substrate.

Belongs to the MetA family.

It localises to the cytoplasm. It catalyses the reaction L-homoserine + acetyl-CoA = O-acetyl-L-homoserine + CoA. It participates in amino-acid biosynthesis; L-methionine biosynthesis via de novo pathway; O-acetyl-L-homoserine from L-homoserine: step 1/1. Transfers an acetyl group from acetyl-CoA to L-homoserine, forming acetyl-L-homoserine. This chain is Homoserine O-acetyltransferase, found in Streptococcus thermophilus (strain ATCC BAA-250 / LMG 18311).